The chain runs to 225 residues: Putative amino-acid transporter YggA (225 aa).

Transmembrane regions (helical) follow at residues 1-21, 37-57, 65-85, 116-136, and 150-170; these read MFAT…PIGA, LLTA…GVFG, SPIG…WFGI, LGVT…LGSF, and AVAM…AVVL.

Belongs to the LysE/ArgO transporter (TC 2.A.75) family.

It is found in the cell membrane. The protein is Putative amino-acid transporter YggA of Aeromonas hydrophila.